Here is a 511-residue protein sequence, read N- to C-terminus: Putative polyol transporter 1 (511 aa).

The next 12 helical transmembrane spans lie at 27–47 (FACAILASMTSIILGYDIGVM), 63–83 (VQLEILMGILNIYSLVGSGAA), 94–114 (YTIVLAGAFFFCGALLMGFAT), 124–144 (FVAGIGVGYAMMIAPVYTAEV), 151–171 (GFLTSFPEIFINIGILLGYVS), 186–206 (FMLGVGAVPSVFLAIGVLAMP), 284–304 (ILIACLGIHFAQQASGIDAVV), 324–344 (LATVAVGVVKTLFIVVGTCVV), 351–371 (ALLLTSMGGMFLSLTALGTSL), 384–404 (WAIGLAVTTVMTFVATFSIGA), 424–444 (GASLGVMLNRLMSGIIGMTFL), and 454–474 (GAFLLFAGVAAAAWVFFFTFL).

This sequence belongs to the major facilitator superfamily. Sugar transporter (TC 2.A.1.1) family.

It is found in the membrane. Plasma membrane sugar-proton symporter. The polypeptide is Putative polyol transporter 1 (PLT1) (Arabidopsis thaliana (Mouse-ear cress)).